We begin with the raw amino-acid sequence, 330 residues long: Beta-hexosaminidase (330 aa).

Substrate contacts are provided by residues Asp-62, Arg-70, Arg-130, and 160–161 (KH). Residue His-173 is the Proton donor/acceptor of the active site. Asp-242 functions as the Nucleophile in the catalytic mechanism.

The protein belongs to the glycosyl hydrolase 3 family. NagZ subfamily.

The protein resides in the cytoplasm. It catalyses the reaction Hydrolysis of terminal non-reducing N-acetyl-D-hexosamine residues in N-acetyl-beta-D-hexosaminides.. Its pathway is cell wall biogenesis; peptidoglycan recycling. Its function is as follows. Plays a role in peptidoglycan recycling by cleaving the terminal beta-1,4-linked N-acetylglucosamine (GlcNAc) from peptide-linked peptidoglycan fragments, giving rise to free GlcNAc, anhydro-N-acetylmuramic acid and anhydro-N-acetylmuramic acid-linked peptides. The polypeptide is Beta-hexosaminidase (Vibrio cholerae serotype O1 (strain ATCC 39541 / Classical Ogawa 395 / O395)).